We begin with the raw amino-acid sequence, 274 residues long: Large ribosomal subunit protein uL2 (274 aa).

2 disordered regions span residues alanine 28–glycine 55 and valine 224–lysine 274. Basic and acidic residues predominate over residues lysine 263 to lysine 274.

It belongs to the universal ribosomal protein uL2 family. As to quaternary structure, part of the 50S ribosomal subunit. Forms a bridge to the 30S subunit in the 70S ribosome.

Its function is as follows. One of the primary rRNA binding proteins. Required for association of the 30S and 50S subunits to form the 70S ribosome, for tRNA binding and peptide bond formation. It has been suggested to have peptidyltransferase activity; this is somewhat controversial. Makes several contacts with the 16S rRNA in the 70S ribosome. The chain is Large ribosomal subunit protein uL2 from Pseudomonas fluorescens (strain ATCC BAA-477 / NRRL B-23932 / Pf-5).